Reading from the N-terminus, the 628-residue chain is tRNA uridine 5-carboxymethylaminomethyl modification enzyme MnmG (628 aa).

Residues 14–19, V126, and S181 contribute to the FAD site; that span reads GAGHAG. Residue 273 to 287 participates in NAD(+) binding; that stretch reads GPRYCPSIEDKVVRF. An FAD-binding site is contributed by Q370.

This sequence belongs to the MnmG family. As to quaternary structure, homodimer. Heterotetramer of two MnmE and two MnmG subunits. It depends on FAD as a cofactor.

The protein localises to the cytoplasm. NAD-binding protein involved in the addition of a carboxymethylaminomethyl (cmnm) group at the wobble position (U34) of certain tRNAs, forming tRNA-cmnm(5)s(2)U34. The sequence is that of tRNA uridine 5-carboxymethylaminomethyl modification enzyme MnmG from Pelobacter propionicus (strain DSM 2379 / NBRC 103807 / OttBd1).